Reading from the N-terminus, the 235-residue chain is Probable transcriptional regulatory protein JJD26997_0557 (235 aa).

The protein belongs to the TACO1 family.

The protein resides in the cytoplasm. In Campylobacter jejuni subsp. doylei (strain ATCC BAA-1458 / RM4099 / 269.97), this protein is Probable transcriptional regulatory protein JJD26997_0557.